Reading from the N-terminus, the 359-residue chain is Peptide chain release factor 1 (359 aa).

Residue Gln-236 is modified to N5-methylglutamine.

It belongs to the prokaryotic/mitochondrial release factor family. In terms of processing, methylated by PrmC. Methylation increases the termination efficiency of RF1.

The protein localises to the cytoplasm. Peptide chain release factor 1 directs the termination of translation in response to the peptide chain termination codons UAG and UAA. The chain is Peptide chain release factor 1 from Streptococcus agalactiae serotype V (strain ATCC BAA-611 / 2603 V/R).